The following is a 38-amino-acid chain: Photosystem I reaction center subunit IX (38 aa).

A helical transmembrane segment spans residues 4–24 (FLTTAPVVAAIWFTLTAGILI).

This sequence belongs to the PsaJ family.

The protein localises to the cellular thylakoid membrane. Functionally, may help in the organization of the PsaE and PsaF subunits. This Parasynechococcus marenigrum (strain WH8102) protein is Photosystem I reaction center subunit IX.